The sequence spans 159 residues: Ribosomal RNA large subunit methyltransferase H (159 aa).

Residues Gly108 and 127–132 (FGKLTM) contribute to the S-adenosyl-L-methionine site.

The protein belongs to the RNA methyltransferase RlmH family. As to quaternary structure, homodimer.

It localises to the cytoplasm. It catalyses the reaction pseudouridine(1915) in 23S rRNA + S-adenosyl-L-methionine = N(3)-methylpseudouridine(1915) in 23S rRNA + S-adenosyl-L-homocysteine + H(+). Its function is as follows. Specifically methylates the pseudouridine at position 1915 (m3Psi1915) in 23S rRNA. The chain is Ribosomal RNA large subunit methyltransferase H from Lactobacillus helveticus (strain DPC 4571).